Reading from the N-terminus, the 266-residue chain is Interleukin-33 (266 aa).

Residues 1–67 (MRPRMKYSNS…ETSYFRKEPT (67 aa)) form a homeodomain-like HTH domain region. Residues 1-101 (MRPRMKYSNS…RSLLGSIQAF (101 aa)) constitute a propeptide that is removed on maturation. The tract at residues 66–108 (PTKRYSLKSGTKHEENFSAYPRDSRKRSLLGSIQAFAASVDTL) is interaction with RELA.

This sequence belongs to the IL-1 family. Highly divergent. (Microbial infection) Interacts (in reduced form) with H.polygyrus ARI; the interaction abolishes the interaction with its primary receptor IL1RL1. As to quaternary structure, forms a 1:1:1 heterotrimeric complex with its primary high-affinity receptor IL1RL1 and the coreceptor IL1RAP. Interacts with cargo receptor TMED10; the interaction mediates the translocation from the cytoplasm into the ERGIC (endoplasmic reticulum-Golgi intermediate compartment) and thereby secretion. In terms of processing, the full-length protein can be released from cells and is able to signal via the IL1RL1/ST2 receptor. However, proteolytic processing by CELA1, CSTG/cathepsin G and ELANE/neutrophil elastase produces C-terminal peptides that are more active than the unprocessed full-length protein. May also be proteolytically processed by calpains. Proteolytic cleavage mediated by apoptotic caspases including CASP3 and CASP7 results in IL33 inactivation. In vitro proteolytic cleavage by CASP1 was reported but could not be confirmed in vivo suggesting that IL33 is probably not a direct substrate for that caspase.

The protein localises to the nucleus. It localises to the chromosome. Its subcellular location is the cytoplasm. It is found in the cytoplasmic vesicle. The protein resides in the secretory vesicle. The protein localises to the secreted. Its function is as follows. Cytokine that binds to and signals through the IL1RL1/ST2 receptor which in turn activates NF-kappa-B and MAPK signaling pathways in target cells. Involved in the maturation of Th2 cells inducing the secretion of T-helper type 2-associated cytokines. Also involved in activation of mast cells, basophils, eosinophils and natural killer cells. Acts as an enhancer of polarization of alternatively activated macrophages. Acts as a chemoattractant for Th2 cells, and may function as an 'alarmin', that amplifies immune responses during tissue injury. Induces rapid UCP2-dependent mitochondrial rewiring that attenuates the generation of reactive oxygen species and preserves the integrity of Krebs cycle required for persistent production of itaconate and subsequent GATA3-dependent differentiation of inflammation-resolving alternatively activated macrophages. In terms of biological role, in quiescent endothelia the uncleaved form is constitutively and abundantly expressed, and acts as a chromatin-associated nuclear factor with transcriptional repressor properties, it may sequester nuclear NF-kappaB/RELA, lowering expression of its targets. This form is rapidely lost upon angiogenic or pro-inflammatory activation. The polypeptide is Interleukin-33 (Mus musculus (Mouse)).